A 297-amino-acid polypeptide reads, in one-letter code: Ribosomal RNA small subunit methyltransferase H (297 aa).

Residues 37–39 (GGH), E56, F87, D102, and H109 each bind S-adenosyl-L-methionine.

This sequence belongs to the methyltransferase superfamily. RsmH family.

It is found in the cytoplasm. It carries out the reaction cytidine(1402) in 16S rRNA + S-adenosyl-L-methionine = N(4)-methylcytidine(1402) in 16S rRNA + S-adenosyl-L-homocysteine + H(+). In terms of biological role, specifically methylates the N4 position of cytidine in position 1402 (C1402) of 16S rRNA. The chain is Ribosomal RNA small subunit methyltransferase H from Borrelia duttonii (strain Ly).